The following is a 459-amino-acid chain: Pentatricopeptide repeat-containing protein At1g07740, mitochondrial (459 aa).

The N-terminal 20 residues, 1–20 (MRRRLSSVLINNQCIASQRH), are a transit peptide targeting the mitochondrion. The disordered stretch occupies residues 19 to 41 (RHYHTSRPEKPTKKASSHEPTHK). Over residues 24–41 (SRPEKPTKKASSHEPTHK) the composition is skewed to basic and acidic residues. PPR repeat units lie at residues 80 to 114 (DYPS…NVRC), 115 to 149 (RESL…DCVR), 150 to 184 (TIQS…RLRP), 185 to 219 (NSVS…EVQP), 220 to 254 (SVVT…RIRP), 255 to 289 (NAVT…GCKP), 290 to 324 (GLVN…RIKP), 325 to 359 (DVVI…GCKP), 360 to 394 (NAAT…RHCP), and 395 to 429 (TPAT…NLSF).

The protein belongs to the PPR family. P subfamily.

It localises to the mitochondrion. This is Pentatricopeptide repeat-containing protein At1g07740, mitochondrial from Arabidopsis thaliana (Mouse-ear cress).